The following is a 282-amino-acid chain: Tyrosine recombinase XerA (282 aa).

One can recognise a Core-binding (CB) domain in the interval glutamate 2–glycine 79. Residues serine 95–glutamate 271 enclose the Tyr recombinase domain. Catalysis depends on residues arginine 132, lysine 157, histidine 223, arginine 226, and histidine 249. Catalysis depends on tyrosine 258, which acts as the O-(3'-phospho-DNA)-tyrosine intermediate.

Belongs to the 'phage' integrase family. XerA subfamily.

The protein resides in the cytoplasm. Site-specific tyrosine recombinase, which acts by catalyzing the cutting and rejoining of the recombining DNA molecules. The chain is Tyrosine recombinase XerA from Thermococcus onnurineus (strain NA1).